Reading from the N-terminus, the 503-residue chain is Probable cytosol aminopeptidase (503 aa).

Positions 270 and 275 each coordinate Mn(2+). The active site involves lysine 282. Aspartate 293, aspartate 352, and glutamate 354 together coordinate Mn(2+). Arginine 356 is a catalytic residue.

Belongs to the peptidase M17 family. Mn(2+) serves as cofactor.

The protein localises to the cytoplasm. It catalyses the reaction Release of an N-terminal amino acid, Xaa-|-Yaa-, in which Xaa is preferably Leu, but may be other amino acids including Pro although not Arg or Lys, and Yaa may be Pro. Amino acid amides and methyl esters are also readily hydrolyzed, but rates on arylamides are exceedingly low.. It carries out the reaction Release of an N-terminal amino acid, preferentially leucine, but not glutamic or aspartic acids.. Presumably involved in the processing and regular turnover of intracellular proteins. Catalyzes the removal of unsubstituted N-terminal amino acids from various peptides. In Enterobacter sp. (strain 638), this protein is Probable cytosol aminopeptidase.